A 274-amino-acid polypeptide reads, in one-letter code: MSVVSLPQMLEAGVHFGHQTRRWNPKMRRYIFTDRNGIHIIDLTQTAHLLDEAYSYLREASDQGKKILFVGTKRQAAPVIAQEAKRCGMFWVNQRWLGGMLTNWDTIRTSVDQLKELETMEANGTLDLLPKKEASVTRKKLERLTKYLGGLKNMRRKPDILLVVDQRREQNAVMEARRLNIPIVSLLDTNCDPDLTDVGIPANDDAIRSIRLIVGKLADAIYEGRHGQLEDFSEEEPVPAAAPVAAVAVAVAAPAEAESEDKGEVLYSFDDEEE.

A disordered region spans residues 255-274 (AEAESEDKGEVLYSFDDEEE).

Belongs to the universal ribosomal protein uS2 family.

This Gloeobacter violaceus (strain ATCC 29082 / PCC 7421) protein is Small ribosomal subunit protein uS2.